Here is a 905-residue protein sequence, read N- to C-terminus: Protein translocase subunit SecA (905 aa).

ATP contacts are provided by residues Gln86, 104–108 (GEGKT), and Asp499. 4 residues coordinate Zn(2+): Cys890, Cys892, Cys901, and His902.

It belongs to the SecA family. As to quaternary structure, monomer and homodimer. Part of the essential Sec protein translocation apparatus which comprises SecA, SecYEG and auxiliary proteins SecDF-YajC and YidC. Requires Zn(2+) as cofactor.

The protein localises to the cell inner membrane. Its subcellular location is the cytoplasm. The catalysed reaction is ATP + H2O + cellular proteinSide 1 = ADP + phosphate + cellular proteinSide 2.. Part of the Sec protein translocase complex. Interacts with the SecYEG preprotein conducting channel. Has a central role in coupling the hydrolysis of ATP to the transfer of proteins into and across the cell membrane, serving both as a receptor for the preprotein-SecB complex and as an ATP-driven molecular motor driving the stepwise translocation of polypeptide chains across the membrane. The sequence is that of Protein translocase subunit SecA from Rickettsia typhi (strain ATCC VR-144 / Wilmington).